We begin with the raw amino-acid sequence, 381 residues long: Creatine kinase M-type (381 aa).

Residues 11–98 form the Phosphagen kinase N-terminal domain; sequence KLNYKPEEEY…FDPIISDRHG (88 aa). The region spanning 125–367 is the Phosphagen kinase C-terminal domain; it reads YVLSSRVRTG…KLMVEMEKKL (243 aa). Residue 128-132 participates in ATP binding; that stretch reads SSRVR. At Ser164 the chain carries Phosphoserine. Phosphothreonine is present on Thr166. Residue Ser178 is modified to Phosphoserine. Thr180 carries the phosphothreonine modification. His191 contributes to the ATP binding site. Ser199 is subject to Phosphoserine. Arg236 and Arg292 together coordinate ATP. Phosphothreonine is present on residues Thr313 and Thr322. Residues 320–325 and Asp335 each bind ATP; that span reads RGTGGV. At Ser372 the chain carries Phosphoserine.

The protein belongs to the ATP:guanido phosphotransferase family. Dimer of identical or non-identical chains, which can be either B (brain type) or M (muscle type). With MM being the major form in skeletal muscle and myocardium, MB existing in myocardium, and BB existing in many tissues, especially brain.

Its subcellular location is the cytoplasm. The catalysed reaction is creatine + ATP = N-phosphocreatine + ADP + H(+). In terms of biological role, reversibly catalyzes the transfer of phosphate between ATP and various phosphogens (e.g. creatine phosphate). Creatine kinase isoenzymes play a central role in energy transduction in tissues with large, fluctuating energy demands, such as skeletal muscle, heart, brain and spermatozoa. This Homo sapiens (Human) protein is Creatine kinase M-type (CKM).